The following is a 417-amino-acid chain: UDP-N-acetylmuramoylalanine--D-glutamate ligase (417 aa).

Position 104–110 (104–110 (GSNGKST)) interacts with ATP.

This sequence belongs to the MurCDEF family.

It is found in the cytoplasm. The enzyme catalyses UDP-N-acetyl-alpha-D-muramoyl-L-alanine + D-glutamate + ATP = UDP-N-acetyl-alpha-D-muramoyl-L-alanyl-D-glutamate + ADP + phosphate + H(+). It functions in the pathway cell wall biogenesis; peptidoglycan biosynthesis. In terms of biological role, cell wall formation. Catalyzes the addition of glutamate to the nucleotide precursor UDP-N-acetylmuramoyl-L-alanine (UMA). The chain is UDP-N-acetylmuramoylalanine--D-glutamate ligase from Francisella tularensis subsp. novicida (strain U112).